Reading from the N-terminus, the 954-residue chain is Bifunctional glutamine synthetase adenylyltransferase/adenylyl-removing enzyme (954 aa).

An adenylyl removase region spans residues 1 to 450 (MENISNKPLS…HFIETVGGRT (450 aa)). An adenylyl transferase region spans residues 454 to 954 (GADLWTQQLW…MDIYQRILVD (501 aa)).

The protein belongs to the GlnE family. Mg(2+) is required as a cofactor.

The enzyme catalyses [glutamine synthetase]-O(4)-(5'-adenylyl)-L-tyrosine + phosphate = [glutamine synthetase]-L-tyrosine + ADP. It catalyses the reaction [glutamine synthetase]-L-tyrosine + ATP = [glutamine synthetase]-O(4)-(5'-adenylyl)-L-tyrosine + diphosphate. Functionally, involved in the regulation of glutamine synthetase GlnA, a key enzyme in the process to assimilate ammonia. When cellular nitrogen levels are high, the C-terminal adenylyl transferase (AT) inactivates GlnA by covalent transfer of an adenylyl group from ATP to specific tyrosine residue of GlnA, thus reducing its activity. Conversely, when nitrogen levels are low, the N-terminal adenylyl removase (AR) activates GlnA by removing the adenylyl group by phosphorolysis, increasing its activity. The regulatory region of GlnE binds the signal transduction protein PII (GlnB) which indicates the nitrogen status of the cell. The protein is Bifunctional glutamine synthetase adenylyltransferase/adenylyl-removing enzyme of Shewanella woodyi (strain ATCC 51908 / MS32).